The following is a 650-amino-acid chain: Probable Xaa-Pro aminopeptidase P (650 aa).

The Mn(2+) site is built by Asp447, Asp458, Glu556, and Glu570.

It belongs to the peptidase M24B family. The cofactor is Mn(2+).

It carries out the reaction Release of any N-terminal amino acid, including proline, that is linked to proline, even from a dipeptide or tripeptide.. Catalyzes the removal of a penultimate prolyl residue from the N-termini of peptides. In Phaeosphaeria nodorum (strain SN15 / ATCC MYA-4574 / FGSC 10173) (Glume blotch fungus), this protein is Probable Xaa-Pro aminopeptidase P (AMPP).